The chain runs to 522 residues: MASGGGGCSASERLPPPFPGLEPESEGAAGGSEPEAGDSDTEGEDIFTGAAVVSKHQSPKITTSLLPINNGSKENGIHEEQDQEPQDLFADATVELSLDSTQNNQKKVLAKTLISLPPQEATNSSKPQPTYEELEEEEQEDQFDLTVGITDPEKIGDGMNAYVAYKVTTQTSLPLFRSKQFAVKRRFSDFLGLYEKLSEKHSQNGFIVPPPPEKSLIGMTKVKVGKEDSSSAEFLEKRRAALERYLQRIVNHPTMLQDPDVREFLEKEELPRAVGTQTLSGAGLLKMFNKATDAVSKMTIKMNESDIWFEEKLQEVECEEQRLRKLHAVVETLVNHRKELALNTAQFAKSLAMLGSSEDNTALSRALSQLAEVEEKIEQLHQEQANNDFFLLAELLSDYIRLLAIVRAAFDQRMKTWQRWQDAQATLQKKREAEARLLWANKPDKLQQAKDEILEWESRVTQYERDFERISTVVRKEVIRFEKEKSKDFKNHVIKYLETLLYSQQQLAKYWEAFLPEAKAIS.

2 disordered regions span residues 1–84 (MASG…QDQE) and 115–142 (SLPP…QEDQ). Phosphoserine is present on residues S32 and S39. Positions 35–45 (EAGDSDTEGED) are enriched in acidic residues. T41 and T48 each carry phosphothreonine. Residues 55–73 (KHQSPKITTSLLPINNGSK) are compositionally biased toward polar residues. Residues S58 and S72 each carry the phosphoserine modification. Residues 132–142 (EELEEEEQEDQ) are compositionally biased toward acidic residues. Residues 143-272 (FDLTVGITDP…EFLEKEELPR (130 aa)) form the PX domain. A 1,2-diacyl-sn-glycero-3-phospho-(1D-myo-inositol-3-phosphate)-binding residues include R186, S188, and K214. Phosphoserine is present on S188. Residue K237 is modified to N6-acetyllysine. R238 contacts a 1,2-diacyl-sn-glycero-3-phospho-(1D-myo-inositol-3-phosphate). Position 280 is a phosphoserine (S280). The tract at residues 281 to 298 (GAGLLKMFNKATDAVSKM) is membrane-binding amphipathic helix. One can recognise a BAR domain in the interval 302-522 (MNESDIWFEE…AFLPEAKAIS (221 aa)).

It belongs to the sorting nexin family. As to quaternary structure, predominantly forms heterodimers with BAR domain-containing sorting nexins SNX5, SNX6 and SNX32; can self-associate to form homodimers. The heterodimers are proposed to self-assemble into helical arrays on the membrane to stabilize and expand local membrane curvature underlying endosomal tubule formation. Thought to be a component of the originally described retromer complex (also called SNX-BAR retromer) which is a pentamer containing the heterotrimeric retromer cargo-selective complex (CSC), also described as vacuolar protein sorting subcomplex (VPS) and a heterodimeric membrane-deforming subcomplex formed between SNX1 or SNX2 and SNX5 or SNX6 (also called SNX-BAR subcomplex); the respective CSC and SNX-BAR subcomplexes associate with low affinity. Interacts with SNX5, SNX6, SNX32, VPS26A, VPS29, VPS35, DRD5, DENND5A, KALRN, RHOG (GDP-bound form). The interaction with SNX2 is reported controversially. Interacts with DNAJC13; prevented by presence of HGS. Interacts with HGS.

It is found in the endosome membrane. The protein resides in the golgi apparatus. The protein localises to the trans-Golgi network membrane. Its subcellular location is the early endosome membrane. It localises to the cell projection. It is found in the lamellipodium. In terms of biological role, involved in several stages of intracellular trafficking. Interacts with membranes containing phosphatidylinositol 3-phosphate (PtdIns(3P)) or phosphatidylinositol 3,5-bisphosphate (PtdIns(3,5)P2). Acts in part as component of the retromer membrane-deforming SNX-BAR subcomplex. The SNX-BAR retromer mediates retrograde transport of cargo proteins from endosomes to the trans-Golgi network (TGN) and is involved in endosome-to-plasma membrane transport for cargo protein recycling. The SNX-BAR subcomplex functions to deform the donor membrane into a tubular profile called endosome-to-TGN transport carrier (ETC). Can sense membrane curvature and has in vitro vesicle-to-membrane remodeling activity. Involved in retrograde endosome-to-TGN transport of lysosomal enzyme receptors (IGF2R, M6PR and SORT1) and Shiginella dysenteria toxin stxB. Plays a role in targeting ligand-activated EGFR to the lysosomes for degradation after endocytosis from the cell surface and release from the Golgi. Involvement in retromer-independent endocytic trafficking of P2RY1 and lysosomal degradation of protease-activated receptor-1/F2R. Promotes KALRN- and RHOG-dependent but retromer-independent membrane remodeling such as lamellipodium formation; the function is dependent on GEF activity of KALRN. Required for endocytosis of DRD5 upon agonist stimulation but not for basal receptor trafficking. The polypeptide is Sorting nexin-1 (SNX1) (Homo sapiens (Human)).